Here is a 107-residue protein sequence, read N- to C-terminus: Urease subunit beta (107 aa).

The protein belongs to the urease beta subunit family. As to quaternary structure, heterotrimer of UreA (gamma), UreB (beta) and UreC (alpha) subunits. Three heterotrimers associate to form the active enzyme.

The protein localises to the cytoplasm. The catalysed reaction is urea + 2 H2O + H(+) = hydrogencarbonate + 2 NH4(+). It functions in the pathway nitrogen metabolism; urea degradation; CO(2) and NH(3) from urea (urease route): step 1/1. This is Urease subunit beta from Janthinobacterium sp. (strain Marseille) (Minibacterium massiliensis).